Consider the following 128-residue polypeptide: Histone H2A (128 aa).

This sequence belongs to the histone H2A family. As to quaternary structure, the nucleosome is a histone octamer containing two molecules each of H2A, H2B, H3 and H4 assembled in one H3-H4 heterotetramer and two H2A-H2B heterodimers. The octamer wraps approximately 147 bp of DNA.

The protein localises to the nucleus. It is found in the chromosome. Core component of nucleosome. Nucleosomes wrap and compact DNA into chromatin, limiting DNA accessibility to the cellular machineries which require DNA as a template. Histones thereby play a central role in transcription regulation, DNA repair, DNA replication and chromosomal stability. DNA accessibility is regulated via a complex set of post-translational modifications of histones, also called histone code, and nucleosome remodeling. In Encephalitozoon cuniculi (strain GB-M1) (Microsporidian parasite), this protein is Histone H2A (HTA1).